The chain runs to 604 residues: Kinesin-like protein KIN-14O (604 aa).

The stretch at Met-22–Lys-61 forms a coiled coil. The Kinesin motor domain occupies Ser-63–Ile-387. Position 141-148 (Gly-141–Thr-148) interacts with ATP. Residues Arg-383–Ala-443 are a coiled coil. 2 disordered regions span residues Asp-465–Leu-511 and Ser-565–Thr-604. The segment covering Ser-565 to Ala-574 has biased composition (polar residues). The span at Leu-593 to Thr-604 shows a compositional bias: basic residues.

The protein belongs to the TRAFAC class myosin-kinesin ATPase superfamily. Kinesin family. KIN-14 subfamily.

The chain is Kinesin-like protein KIN-14O from Oryza sativa subsp. japonica (Rice).